The following is a 373-amino-acid chain: Queuine tRNA-ribosyltransferase (373 aa).

Catalysis depends on Asp-89, which acts as the Proton acceptor. Substrate-binding positions include 89 to 93, Asp-143, Gln-187, and Gly-214; that span reads DSGGF. Residues 245 to 251 form an RNA binding region; sequence GVGKPED. Asp-264 (nucleophile) is an active-site residue. The segment at 269–273 is RNA binding; important for wobble base 34 recognition; that stretch reads TRNAR. Zn(2+)-binding residues include Cys-302, Cys-304, Cys-307, and His-333.

This sequence belongs to the queuine tRNA-ribosyltransferase family. As to quaternary structure, homodimer. Within each dimer, one monomer is responsible for RNA recognition and catalysis, while the other monomer binds to the replacement base PreQ1. The cofactor is Zn(2+).

It carries out the reaction 7-aminomethyl-7-carbaguanine + guanosine(34) in tRNA = 7-aminomethyl-7-carbaguanosine(34) in tRNA + guanine. The protein operates within tRNA modification; tRNA-queuosine biosynthesis. Catalyzes the base-exchange of a guanine (G) residue with the queuine precursor 7-aminomethyl-7-deazaguanine (PreQ1) at position 34 (anticodon wobble position) in tRNAs with GU(N) anticodons (tRNA-Asp, -Asn, -His and -Tyr). Catalysis occurs through a double-displacement mechanism. The nucleophile active site attacks the C1' of nucleotide 34 to detach the guanine base from the RNA, forming a covalent enzyme-RNA intermediate. The proton acceptor active site deprotonates the incoming PreQ1, allowing a nucleophilic attack on the C1' of the ribose to form the product. After dissociation, two additional enzymatic reactions on the tRNA convert PreQ1 to queuine (Q), resulting in the hypermodified nucleoside queuosine (7-(((4,5-cis-dihydroxy-2-cyclopenten-1-yl)amino)methyl)-7-deazaguanosine). The polypeptide is Queuine tRNA-ribosyltransferase (Tolumonas auensis (strain DSM 9187 / NBRC 110442 / TA 4)).